Here is a 274-residue protein sequence, read N- to C-terminus: Ommochrome-binding protein (274 aa).

Positions 1 to 18 (MKLLILTICALHVNQMMA) are cleaved as a signal peptide. Asn183 carries N-linked (GlcNAc...) asparagine glycosylation.

Monomer. In terms of tissue distribution, present in larval hemolymph and synthesized by the fat body.

Binds to an ommochrome, ommatin D which is a yellow chromophore. May be involved in guiding the chromophore through the hemolymph from the epidermis to the gut. The sequence is that of Ommochrome-binding protein from Manduca sexta (Tobacco hawkmoth).